The sequence spans 510 residues: tRNA(Ile)-lysidine synthase (510 aa).

Residue 32–37 participates in ATP binding; sequence SGGLDS.

The protein belongs to the tRNA(Ile)-lysidine synthase family.

Its subcellular location is the cytoplasm. The enzyme catalyses cytidine(34) in tRNA(Ile2) + L-lysine + ATP = lysidine(34) in tRNA(Ile2) + AMP + diphosphate + H(+). Its function is as follows. Ligates lysine onto the cytidine present at position 34 of the AUA codon-specific tRNA(Ile) that contains the anticodon CAU, in an ATP-dependent manner. Cytidine is converted to lysidine, thus changing the amino acid specificity of the tRNA from methionine to isoleucine. The chain is tRNA(Ile)-lysidine synthase from Blochmanniella pennsylvanica (strain BPEN).